Consider the following 245-residue polypeptide: Endo-chitosanase (245 aa).

A signal peptide spans 1–17 (MHFAGIVAIALATGATA).

The protein belongs to the glycosyl hydrolase 75 family.

It localises to the secreted. The catalysed reaction is Endohydrolysis of beta-(1-&gt;4)-linkages between D-glucosamine residues in a partly acetylated chitosan.. Chitosanase catalyzing the endo-type cleavage of chitosan, the deacylated form of chitin. Chitosanase may be crucial in the degradation of the deacetylated portion of chitin in the fungal cell wall. Chitoolisaccharides produced by the hydrolysis of partially N-acetylated chitosan are known to have many biological activities, including antibacterial activity, immune-enhancing effects, and elicitor activity. This is Endo-chitosanase (csn) from Aspergillus oryzae (strain ATCC 42149 / RIB 40) (Yellow koji mold).